The sequence spans 87 residues: Cytochrome c6 (87 aa).

Heme c-binding residues include Cys10, Cys13, His14, and Met56.

The protein belongs to the cytochrome c family. PetJ subfamily. Monomer. Post-translationally, binds 1 heme c group covalently per subunit.

The protein resides in the plastid. It is found in the chloroplast thylakoid lumen. In terms of biological role, functions as an electron carrier between membrane-bound cytochrome b6-f and photosystem I in oxygenic photosynthesis. The sequence is that of Cytochrome c6 (petJ) from Euglena gracilis.